The following is a 438-amino-acid chain: L-cysteine:1D-myo-inositol 2-amino-2-deoxy-alpha-D-glucopyranoside ligase (438 aa).

Residues 1 to 27 (MKSWSSRPVPELPGTGTAPRVHDTSTG) are disordered. Position 44 (Cys44) interacts with Zn(2+). L-cysteinyl-5'-AMP-binding positions include 44–47 (CGIT), Thr59, and 82–84 (NVT). The 'HIGH' region signature appears at 46–56 (ITPYDATHMGH). Positions 208–213 (DHGGDP) match the 'ERGGDP' region motif. Trp249 provides a ligand contact to L-cysteinyl-5'-AMP. Zn(2+) is bound at residue Cys253. 271–273 (GSD) serves as a coordination point for L-cysteinyl-5'-AMP. Position 278 (His278) interacts with Zn(2+). An L-cysteinyl-5'-AMP-binding site is contributed by Val304. The short motif at 310–314 (KMSKS) is the 'KMSKS' region element.

The protein belongs to the class-I aminoacyl-tRNA synthetase family. MshC subfamily. As to quaternary structure, monomer. Zn(2+) serves as cofactor.

The catalysed reaction is 1D-myo-inositol 2-amino-2-deoxy-alpha-D-glucopyranoside + L-cysteine + ATP = 1D-myo-inositol 2-(L-cysteinylamino)-2-deoxy-alpha-D-glucopyranoside + AMP + diphosphate + H(+). Functionally, catalyzes the ATP-dependent condensation of GlcN-Ins and L-cysteine to form L-Cys-GlcN-Ins. This is L-cysteine:1D-myo-inositol 2-amino-2-deoxy-alpha-D-glucopyranoside ligase from Kocuria rhizophila (strain ATCC 9341 / DSM 348 / NBRC 103217 / DC2201).